The chain runs to 1164 residues: Toxin subunit YenA1 (1164 aa).

Positions 106-131 (RLEKSNSPLVPQTSSSTDASSESQTN) are disordered. A compositionally biased stretch (low complexity) spans 118–130 (TSSSTDASSESQT).

In terms of assembly, semipurified toxin complex consists of at least YenA1, YenA2, YenB, YenC1, YenC2, Chi1 and Chi2. The Yen-TC:K9 subcomplex is about 26 nm tall and 22 nm in diameter with 5-fold symmetry and 5 copies of YenA1, YenA2, Chi1 and Chi2; the chitinase subunits may be solvent accessible on the exterior the complex. The Yen-TC:K9 subcomplex has no insecticidal activity. The native complex with additional YenB, YenC1 and YenC2 subunits is 16 nm taller and is insecticidal; the toxicity-conferring subunits are present at about 1 copy each.

It is found in the secreted. Its activity is regulated as follows. Toxin complex is secreted when grown at 25 degrees Celsius or less; at higher temperatures the proteins are present intracellularly but not secreted. Its function is as follows. Part of an orally active toxin complex (TC) with strong insecticidal effects on larvae of the Coleoptera Costelytra zealandica, Acrossidius tasmania and Adoryphorus couloni and some Lepidoptera larvae. The TC has an endochitinase activity. This Yersinia entomophaga protein is Toxin subunit YenA1.